Here is a 154-residue protein sequence, read N- to C-terminus: Cold shock domain-containing protein C2 (154 aa).

A Phosphoserine modification is found at Ser19. A disordered region spans residues 38–62; the sequence is GGGIAPRDLPSPLPTKRTRTYSATA. One can recognise a CSD domain in the interval 69–136; the sequence is VFKGVCKQFS…KFQAVEVVLT (68 aa).

It localises to the nucleus. The protein resides in the cytoplasm. Functionally, RNA-binding factor which binds specifically to the very 3'-UTR ends of both histone H1 and H3.3 mRNAs, encompassing the polyadenylation signal. Might play a central role in the negative regulation of histone variant synthesis in the developing brain. The protein is Cold shock domain-containing protein C2 (Csdc2) of Mus musculus (Mouse).